Reading from the N-terminus, the 159-residue chain is Probable E3 ubiquitin-protein ligase RHA1A (159 aa).

Residues 86-130 (CTVCLSDFESDDKVRQLPKCGHVFHHYCLDRWIVDYNKMKCPVCR) form an RING-type; atypical zinc finger.

In terms of tissue distribution, predominantly expressed in stems.

It carries out the reaction S-ubiquitinyl-[E2 ubiquitin-conjugating enzyme]-L-cysteine + [acceptor protein]-L-lysine = [E2 ubiquitin-conjugating enzyme]-L-cysteine + N(6)-ubiquitinyl-[acceptor protein]-L-lysine.. Its pathway is protein modification; protein ubiquitination. In terms of biological role, probable E3 ubiquitin-protein ligase that may possess E3 ubiquitin ligase activity in vitro. This is Probable E3 ubiquitin-protein ligase RHA1A from Arabidopsis thaliana (Mouse-ear cress).